A 334-amino-acid polypeptide reads, in one-letter code: Glucokinase-like protein XF_1460 (334 aa).

Residue 18 to 23 (ADVGGT) participates in ATP binding.

It belongs to the bacterial glucokinase family.

This Xylella fastidiosa (strain 9a5c) protein is Glucokinase-like protein XF_1460.